The following is a 431-amino-acid chain: Glutamate-1-semialdehyde 2,1-aminomutase (431 aa).

K269 bears the N6-(pyridoxal phosphate)lysine mark.

This sequence belongs to the class-III pyridoxal-phosphate-dependent aminotransferase family. HemL subfamily. In terms of assembly, homodimer. It depends on pyridoxal 5'-phosphate as a cofactor.

It localises to the cytoplasm. It catalyses the reaction (S)-4-amino-5-oxopentanoate = 5-aminolevulinate. It participates in porphyrin-containing compound metabolism; protoporphyrin-IX biosynthesis; 5-aminolevulinate from L-glutamyl-tRNA(Glu): step 2/2. The polypeptide is Glutamate-1-semialdehyde 2,1-aminomutase (Francisella tularensis subsp. holarctica (strain FTNF002-00 / FTA)).